Reading from the N-terminus, the 186-residue chain is TATA-box-binding protein B (186 aa).

Repeat copies occupy residues 10–86 and 101–179.

The protein belongs to the TBP family.

Its function is as follows. General factor that plays a role in the activation of archaeal genes transcribed by RNA polymerase. Binds specifically to the TATA box promoter element which lies close to the position of transcription initiation. The chain is TATA-box-binding protein B (tbpB1) from Halobacterium salinarum (strain ATCC 700922 / JCM 11081 / NRC-1) (Halobacterium halobium).